The following is a 388-amino-acid chain: Putrescine N-methyltransferase 1 (388 aa).

3 stretches are compositionally biased toward polar residues: residues 1-14 (MEVI…STIF), 23-39 (GYQN…QNGT), and 46-88 (HQNG…GNEL). Residues 1-88 (MEVISTNTNG…TISHDNGNEL (88 aa)) are disordered. Residues 99–336 (PGWFSEFSAL…GVIGYMLCST (238 aa)) form the PABS domain. S-adenosyl-L-methionine is bound by residues Gln130, Glu205, and 236-237 (DG). Asp255 (proton acceptor) is an active-site residue. S-adenosyl-L-methionine is bound at residue Tyr324.

The protein belongs to the class I-like SAM-binding methyltransferase superfamily. Spermidine/spermine synthase family. Mainly expressed in roots.

The enzyme catalyses putrescine + S-adenosyl-L-methionine = N-methylputrescine + S-adenosyl-L-homocysteine + H(+). The protein operates within alkaloid biosynthesis; nicotine biosynthesis. Its function is as follows. Involved in the biosynthesis of pyridine alkaloid natural products, leading mainly to the production of anabasine, anatabine, nicotine and nornicotine, effective deterrents against herbivores with antiparasitic and pesticide properties (neurotoxins); nornicotine serves as the precursor in the synthesis of the carcinogen compound N'-nitrosonornicotine (NNN). Methyltransferase that mediates the conversion of putrescine to N-methylputrescine. This chain is Putrescine N-methyltransferase 1, found in Nicotiana attenuata (Coyote tobacco).